We begin with the raw amino-acid sequence, 146 residues long: SsrA-binding protein (146 aa).

Positions 127–139 (KRQTIKDRDNSRE) are enriched in basic and acidic residues. Positions 127–146 (KRQTIKDRDNSREARKHIRV) are disordered.

The protein belongs to the SmpB family.

The protein localises to the cytoplasm. In terms of biological role, required for rescue of stalled ribosomes mediated by trans-translation. Binds to transfer-messenger RNA (tmRNA), required for stable association of tmRNA with ribosomes. tmRNA and SmpB together mimic tRNA shape, replacing the anticodon stem-loop with SmpB. tmRNA is encoded by the ssrA gene; the 2 termini fold to resemble tRNA(Ala) and it encodes a 'tag peptide', a short internal open reading frame. During trans-translation Ala-aminoacylated tmRNA acts like a tRNA, entering the A-site of stalled ribosomes, displacing the stalled mRNA. The ribosome then switches to translate the ORF on the tmRNA; the nascent peptide is terminated with the 'tag peptide' encoded by the tmRNA and targeted for degradation. The ribosome is freed to recommence translation, which seems to be the essential function of trans-translation. The chain is SsrA-binding protein from Malacoplasma penetrans (strain HF-2) (Mycoplasma penetrans).